A 304-amino-acid chain; its full sequence is Lipoyl synthase (304 aa).

The tract at residues 1 to 21 (MAPELIQIDLEPRKPAPKPSW) is disordered. 7 residues coordinate [4Fe-4S] cluster: cysteine 48, cysteine 53, cysteine 59, cysteine 74, cysteine 78, cysteine 81, and serine 287. The region spanning 60 to 276 (WNHKTATFML…KEEAMKMGFR (217 aa)) is the Radical SAM core domain.

The protein belongs to the radical SAM superfamily. Lipoyl synthase family. Requires [4Fe-4S] cluster as cofactor.

It localises to the cytoplasm. The catalysed reaction is [[Fe-S] cluster scaffold protein carrying a second [4Fe-4S](2+) cluster] + N(6)-octanoyl-L-lysyl-[protein] + 2 oxidized [2Fe-2S]-[ferredoxin] + 2 S-adenosyl-L-methionine + 4 H(+) = [[Fe-S] cluster scaffold protein] + N(6)-[(R)-dihydrolipoyl]-L-lysyl-[protein] + 4 Fe(3+) + 2 hydrogen sulfide + 2 5'-deoxyadenosine + 2 L-methionine + 2 reduced [2Fe-2S]-[ferredoxin]. It functions in the pathway protein modification; protein lipoylation via endogenous pathway; protein N(6)-(lipoyl)lysine from octanoyl-[acyl-carrier-protein]: step 2/2. Its function is as follows. Catalyzes the radical-mediated insertion of two sulfur atoms into the C-6 and C-8 positions of the octanoyl moiety bound to the lipoyl domains of lipoate-dependent enzymes, thereby converting the octanoylated domains into lipoylated derivatives. This Koribacter versatilis (strain Ellin345) protein is Lipoyl synthase.